Consider the following 498-residue polypeptide: Cytochrome P450 monooxygenase aflU (498 aa).

The helical transmembrane segment at 5–27 (TVYTSLIGLLVALTVRSIYRVYF) threads the bilayer. Residues asparagine 259 and asparagine 354 are each glycosylated (N-linked (GlcNAc...) asparagine). Cysteine 438 provides a ligand contact to heme.

Belongs to the cytochrome P450 family. Requires heme as cofactor.

It is found in the membrane. Its pathway is mycotoxin biosynthesis; aflatoxin biosynthesis. Functionally, cytochrome P450 monooxygenase; part of the gene cluster that mediates the biosynthesis of aflatoxins, a group of polyketide-derived furanocoumarins, and part of the most toxic and carcinogenic compounds among the known mycotoxins. The four major aflatoxins produced by A.parasiticus are aflatoxin B1 (AFB1), aflatoxin B2 (AFB2), aflatoxin G1 (AFG1) and aflatoxin G2 (AFG2). Within the aflatoxin pathway, the cytochrome P450 monooxygenase aflU is involved in the last steps in which OMST is converted to aflatoxins B1 and G1, and DHOMST to aflatoxins B2 and G2. The biosynthesis of aflatoxins begins with the norsolorinic acid synthase aflC that combines a hexanoyl starter unit produced by the fatty acid synthase aflA/aflB and 7 malonyl-CoA extender units to synthesize the precursor NOR. The second step is the conversion of NOR to averantin and requires the norsolorinic acid ketoreductase aflD, which catalyzes the dehydration of norsolorinic acid to form (1'S)-averantin. The norsolorinic acid reductases aflE and aflF may also play a role in the conversion of NOR to AVN. The cytochrome P450 monooxygenase aflG then catalyzes the hydroxylation of AVN to 5'hydroxyaverantin (HAVN). The next step is performed by the 5'-hydroxyaverantin dehydrogenase aflH that transforms HAVN to 5'-oxoaverantin (OAVN) which is further converted to averufin (AVF) by aflK that plays a dual role in the pathway, as a 5'-oxoaverantin cyclase that mediates conversion of 5'-oxoaverantin, as well as a versicolorin B synthase in a later step in the pathway. The averufin oxidase aflI catalyzes the conversion of AVF to versiconal hemiacetal acetate (VHA). VHA is then the substrate for the versiconal hemiacetal acetate esterase aflJ to yield versiconal (VAL). Versicolorin B synthase aflK then converts VAL to versicolorin B (VERB) by closing the bisfuran ring of aflatoxin which is required for DNA-binding, thus giving to aflatoxin its activity as a mutagen. Then, the activity of the versicolorin B desaturase aflL leads to versicolorin A (VERA). A branch point starts from VERB since it can also be converted to dihydrodemethylsterigmatocystin (DMDHST), probably also by aflL, VERA being a precursor for aflatoxins B1 and G1, and DMDHST for aflatoxins B2 and G2. Next, the versicolorin reductase aflM and the cytochrome P450 monooxygenase aflN are involved in conversion of VERA to demethylsterigmatocystin (DMST). AflX and aflY seem also involved in this step, through probable aflX-mediated epoxide ring-opening step following versicolorin A oxidation and aflY-mediated Baeyer-Villiger oxidation required for the formation of the xanthone ring. The methyltransferase aflO then leads to the modification of DMST to sterigmatocystin (ST), and of DMDHST to dihydrosterigmatocystin (DHST). Both ST and DHST are then substrates of the O-methyltransferase aflP to yield O-methylsterigmatocystin (OMST) and dihydro-O-methylsterigmatocystin (DHOMST), respectively. Finally OMST is converted to aflatoxins B1 and G1, and DHOMST to aflatoxins B2 and G2, via the action of several enzymes including O-methylsterigmatocystin oxidoreductase aflQ, the cytochrome P450 monooxygenase aflU, but also the NADH-dependent flavin oxidoreductase nadA which is specifically required for the synthesis of AFG1. The sequence is that of Cytochrome P450 monooxygenase aflU from Aspergillus parasiticus (strain ATCC 56775 / NRRL 5862 / SRRC 143 / SU-1).